Consider the following 347-residue polypeptide: NADH-ubiquinone oxidoreductase chain 2 (347 aa).

9 consecutive transmembrane segments (helical) span residues 3-23, 59-79, 93-115, 150-170, 178-198, 200-220, 240-260, 274-294, and 326-346; these read PLAL…TMMS, YFMT…INLM, VASN…HFWV, NTNL…WGGL, ILAY…PFNP, LTLL…MILA, MTIM…LSGF, NSII…YFYT, and LPTL…ISML.

Belongs to the complex I subunit 2 family. As to quaternary structure, core subunit of respiratory chain NADH dehydrogenase (Complex I) which is composed of 45 different subunits. Interacts with TMEM242.

The protein localises to the mitochondrion inner membrane. The enzyme catalyses a ubiquinone + NADH + 5 H(+)(in) = a ubiquinol + NAD(+) + 4 H(+)(out). Core subunit of the mitochondrial membrane respiratory chain NADH dehydrogenase (Complex I) which catalyzes electron transfer from NADH through the respiratory chain, using ubiquinone as an electron acceptor. Essential for the catalytic activity and assembly of complex I. This is NADH-ubiquinone oxidoreductase chain 2 from Elephas maximus (Indian elephant).